We begin with the raw amino-acid sequence, 453 residues long: Trigger factor (453 aa).

One can recognise a PPIase FKBP-type domain in the interval 171–256 (GDRVTINFKG…ATSIEAPQDI (86 aa)).

Belongs to the FKBP-type PPIase family. Tig subfamily.

It is found in the cytoplasm. It carries out the reaction [protein]-peptidylproline (omega=180) = [protein]-peptidylproline (omega=0). Its function is as follows. Involved in protein export. Acts as a chaperone by maintaining the newly synthesized protein in an open conformation. Functions as a peptidyl-prolyl cis-trans isomerase. This is Trigger factor from Bradyrhizobium diazoefficiens (strain JCM 10833 / BCRC 13528 / IAM 13628 / NBRC 14792 / USDA 110).